The sequence spans 354 residues: Nucleoporin seh1 (354 aa).

6 WD repeats span residues 10 to 49 (DHKD…KWNV), 55 to 96 (AHSG…KVSS), 112 to 153 (DSRT…NLSQ), 161 to 209 (SNKL…RKCV), 216 to 259 (DITD…TDIS), and 270 to 309 (EHNC…QWRC).

The protein belongs to the WD repeat SEC13 family. As to quaternary structure, probable component of the nuclear pore complex (NPC). Component of the GATOR complex consisting of mio, Nup44A/Seh1, Im11, Nplr3, Nplr2, Wdr24, Wdr59 and Sec13. Within the GATOR complex, probable component of the GATOR2 subcomplex which is likely composed of mio, Nup44A/Seh1, Wdr24, Wdr59 and Sec13. Interacts with mio. Interacts with Wdr24. The GATOR2 complex associates with unmet in the absence of S-adenosyl-L-methionine; the mio-Wdr24-Nup44A subcomplex is essential and sufficient for this interaction while Wdr59 and Sec13 are dispensable. This association acts as a nutrient sensor to inhibit mTORC1 signaling in the absence of methionine. As to expression, expressed in ovarian cysts.

Its subcellular location is the nucleus envelope. It is found in the lysosome. In terms of biological role, probable component of the nuclear pore complex (NPC). Involved in maintaining the localization of another nucleoporin Mgtor to the nuclear envelope of early meiotic female germline cells. It is not involved in recruiting the nucleoporins Mgtor, Nup107, Nup153 and FG-containing nucleoporins to the NPC. Functionally, an essential component of the GATOR subcomplex GATOR2 which functions as an activator of the amino acid-sensing branch of the mTORC1 signaling pathway. The two GATOR subcomplexes, GATOR1 and GATOR2, regulate the mTORC1 pathway in order to mediate metabolic homeostasis, female gametogenesis and the response to amino acid limitation and complete starvation. GATOR2 activates the mTORC1 signaling pathway through the inhibition of the GATOR1 subcomplex, controlling the switch to cell proliferation growth under nutrient replete conditions and growth during female oocyte development. This component is required for activating mTORC1 specifically in germline cells to promote cell growth and maintain the oocyte fate, probably influences the organization and/or function of microtubules within ovarian cysts, and promotes accumulation of another GATOR2 complex member mio in germline and somatic tissues. GATOR1 and GATOR2 act at different stages of oogenesis to regulate mTORC1 in order to control meiotic entry and promote oocyte growth and development. After exactly four mitotic cyst divisions, the GATOR1 complex members (Iml1, Nprl2 and Nprl3) down-regulate mTORC1 to slow cellular metabolism and promote the mitotic/meiotic transition. At later stages of oogenesis, the mio and Nup44A components of the GATOR2 complex inhibit GATOR1 and thus activate mTORC1 to promote meiotic progression, and drive oocyte growth and development. In addition to its role in the regulation of the mTORC1 complex, functions independently of mTORC1 to prevent the inappropriate accumulation of autolysosomes in germline tissues. The sequence is that of Nucleoporin seh1 from Drosophila melanogaster (Fruit fly).